The sequence spans 699 residues: MNTFQASVSFQDVTVEFSQEEWQHMGPVERTLYRDVMLENYSHLVSVGYCFTKPELIFTLEQGEDPWLLEKEKGFLSRNSPEDSQPDEISEKSPENQGKHLLQVLFTNKLLTTEQEISGKPHNRDINIFRARMMPCKCDIAGSACQGLSLMAPHCQYSKEKAHERNVCDKWLISIKDGRTNTQEKSFAYSKIVKTLHHKEEVIQHQTIQTLGQDFEYNESRKAFLEKAALVTSNSTHPKGKSYNFNKFGENKYDKSTFIIPQNMNPEKSHYEFNDTGNCFCRITHKTLTGGKSFSQKSHIREHHRVHIGVKPFEYGKSFNRNSTLPVHQRTHATDKYSDYHPCTETFSYQSTFSVHQKVHIRAKPYEYNECGKSCSMNSHLIWPQKSHTGEKPYECPECGKAFSEKSRLRKHQRTHTGEKPYKCDGCDKAFSAKSGLRIHQRTHTGEKPFECHECGKSFNYKSILIVHQRTHTGEKPFECNECGKSFSHMSGLRNHRRTHTGERPYKCDECGKAFKLKSGLRKHHRTHTGEKPYKCNQCGKAFGQKSQLRGHHRIHTGEKPYKCNHCGEAFSQKSNLRVHHRTHTGEKPYQCEECGKTFRQKSNLRGHQRTHTGEKPYECNECGKAFSEKSVLRKHQRTHTGEKPYNCNQCGEAFSQKSNLRVHQRTHTGEKPYKCDKCGRTFSQKSSLREHQKAHPGD.

One can recognise a KRAB domain in the interval 8–79; the sequence is VSFQDVTVEF…EKEKGFLSRN (72 aa). A disordered region spans residues 75 to 95; that stretch reads FLSRNSPEDSQPDEISEKSPE. The segment at 279–307 adopts a C2H2-type 1; degenerate zinc-finger fold; the sequence is CFCRITHKTLTGGKSFSQKSHIREHHRVH. The segment at 316–332 adopts a C2H2-type 2; degenerate zinc-finger fold; that stretch reads GKSFNRNSTLPVHQRTH. The segment at 337-360 adopts a C2H2-type 3; degenerate zinc-finger fold; the sequence is YSDYHPCTETFSYQSTFSVHQKVH. The C2H2-type 4; degenerate zinc finger occupies 366 to 388; the sequence is YEYNECGKSCSMNSHLIWPQKSH. 11 C2H2-type zinc fingers span residues 394-416, 422-444, 450-472, 478-500, 506-528, 534-556, 562-584, 590-612, 618-640, 646-668, and 674-696; these read YECP…QRTH, YKCD…QRTH, FECH…QRTH, FECN…RRTH, YKCD…HRTH, YKCN…HRIH, YKCN…HRTH, YQCE…QRTH, YECN…QRTH, YNCN…QRTH, and YKCD…QKAH.

Belongs to the krueppel C2H2-type zinc-finger protein family.

Its subcellular location is the nucleus. May be involved in transcriptional regulation. The protein is Zinc finger protein 782 (ZNF782) of Homo sapiens (Human).